The sequence spans 120 residues: Purkinje cell protein 2 (120 aa).

GoLoco domains lie at 7–29 (QEGF…RCSL) and 47–69 (MDNL…RVTV). The interval 16–120 (HVQGDRMEEQ…SSPQPQTQAP (105 aa)) is disordered. Residues 108–120 (RRNSSPQPQTQAP) show a composition bias toward polar residues. At Ser111 the chain carries Phosphoserine.

In terms of tissue distribution, cerebellum (Purkinje cells) and retinal bipolar neurons.

In terms of biological role, may function as a cell-type specific modulator for G protein-mediated cell signaling. This Mus musculus (Mouse) protein is Purkinje cell protein 2 (Pcp2).